Here is a 353-residue protein sequence, read N- to C-terminus: Nicotinate-nucleotide--dimethylbenzimidazole phosphoribosyltransferase (353 aa).

Residue glutamate 319 is the Proton acceptor of the active site.

This sequence belongs to the CobT family.

It carries out the reaction 5,6-dimethylbenzimidazole + nicotinate beta-D-ribonucleotide = alpha-ribazole 5'-phosphate + nicotinate + H(+). It participates in nucleoside biosynthesis; alpha-ribazole biosynthesis; alpha-ribazole from 5,6-dimethylbenzimidazole: step 1/2. Functionally, catalyzes the synthesis of alpha-ribazole-5'-phosphate from nicotinate mononucleotide (NAMN) and 5,6-dimethylbenzimidazole (DMB). The polypeptide is Nicotinate-nucleotide--dimethylbenzimidazole phosphoribosyltransferase (Prosthecochloris aestuarii (strain DSM 271 / SK 413)).